A 398-amino-acid chain; its full sequence is tRNA-specific 2-thiouridylase MnmA (398 aa).

ATP is bound by residues 19 to 26 (AMSGGVDS) and leucine 45. Cysteine 113 (nucleophile) is an active-site residue. Cysteines 113 and 210 form a disulfide. An ATP-binding site is contributed by glycine 137. An interaction with tRNA region spans residues 160 to 162 (RDQ). The active-site Cysteine persulfide intermediate is cysteine 210.

The protein belongs to the MnmA/TRMU family.

It localises to the cytoplasm. It catalyses the reaction S-sulfanyl-L-cysteinyl-[protein] + uridine(34) in tRNA + AH2 + ATP = 2-thiouridine(34) in tRNA + L-cysteinyl-[protein] + A + AMP + diphosphate + H(+). Catalyzes the 2-thiolation of uridine at the wobble position (U34) of tRNA, leading to the formation of s(2)U34. The polypeptide is tRNA-specific 2-thiouridylase MnmA (Rhodopseudomonas palustris (strain HaA2)).